Consider the following 1926-residue polypeptide: Myosin-15 (1926 aa).

The Myosin N-terminal SH3-like domain maps to 29 to 79; the sequence is DGKKKCWIPDGENAYIEAEVKGSEDDGTVIVETADGESLSIKEDKIQQMNP. The Myosin motor domain maps to 83 to 770; the sequence is EMIEDMAMLT…FLGQLEAIRD (688 aa). Residue Lys127 is modified to N6,N6,N6-trimethyllysine. 176 to 183 is a binding site for ATP; sequence GESGAGKT. Actin-binding stretches follow at residues 647–669 and 749–763; these read LNKL…NPNV and RFGI…GFLG. Residues 773–802 form the IQ domain; that stretch reads LSKVFTLFQARAQGKLMRIKFQKILEERDA. Positions 833–1926 form a coiled coil; that stretch reads KSSEVGEEVA…REFGKKVQEE (1094 aa).

Belongs to the TRAFAC class myosin-kinesin ATPase superfamily. Myosin family. As to quaternary structure, muscle myosin is a hexameric protein that consists of 2 heavy chain subunits (MHC), 2 alkali light chain subunits (MLC) and 2 regulatory light chain subunits (MLC-2).

Its subcellular location is the cytoplasm. The protein resides in the myofibril. Its function is as follows. Muscle contraction. This is Myosin-15 (MYH15) from Homo sapiens (Human).